A 633-amino-acid polypeptide reads, in one-letter code: Copine-7 (633 aa).

2 C2 domains span residues 2-133 and 212-339; these read SAGS…MRVS and NAGK…AQWD. Residues aspartate 245, aspartate 251, aspartate 307, aspartate 309, and aspartate 315 each contribute to the Ca(2+) site. One can recognise a VWFA domain in the interval 382–581; it reads HFTVAIDFTA…PALRDIVQFV (200 aa).

The protein belongs to the copine family. Requires Ca(2+) as cofactor. As to expression, expressed in the brain, testis, thymus and small intestine.

Its subcellular location is the cytoplasm. It localises to the nucleus. The protein resides in the cell membrane. Functionally, calcium-dependent phospholipid-binding protein that may play a role in calcium-mediated intracellular processes. The protein is Copine-7 of Homo sapiens (Human).